The chain runs to 125 residues: Small ribosomal subunit protein uS12 (125 aa).

The interval 1–31 (MPTINQLVRHGRQTEVTKSKSPAMQGGPQRR) is disordered. Residue Asp89 is modified to 3-methylthioaspartic acid. The tract at residues 105 to 125 (QGVKDRKQSRSKYGAKRPKKA) is disordered. Residues 113 to 125 (SRSKYGAKRPKKA) are compositionally biased toward basic residues.

It belongs to the universal ribosomal protein uS12 family. As to quaternary structure, part of the 30S ribosomal subunit. Contacts proteins S8 and S17. May interact with IF1 in the 30S initiation complex.

In terms of biological role, with S4 and S5 plays an important role in translational accuracy. Interacts with and stabilizes bases of the 16S rRNA that are involved in tRNA selection in the A site and with the mRNA backbone. Located at the interface of the 30S and 50S subunits, it traverses the body of the 30S subunit contacting proteins on the other side and probably holding the rRNA structure together. The combined cluster of proteins S8, S12 and S17 appears to hold together the shoulder and platform of the 30S subunit. In Methylibium petroleiphilum (strain ATCC BAA-1232 / LMG 22953 / PM1), this protein is Small ribosomal subunit protein uS12.